The chain runs to 68 residues: DNA-directed RNA polymerase subunit omega (68 aa).

This sequence belongs to the RNA polymerase subunit omega family. In terms of assembly, the RNAP catalytic core consists of 2 alpha, 1 beta, 1 beta' and 1 omega subunit. When a sigma factor is associated with the core the holoenzyme is formed, which can initiate transcription.

It carries out the reaction RNA(n) + a ribonucleoside 5'-triphosphate = RNA(n+1) + diphosphate. In terms of biological role, promotes RNA polymerase assembly. Latches the N- and C-terminal regions of the beta' subunit thereby facilitating its interaction with the beta and alpha subunits. The polypeptide is DNA-directed RNA polymerase subunit omega (Neisseria gonorrhoeae (strain NCCP11945)).